The primary structure comprises 557 residues: Protein Red (557 aa).

The interval 1–90 (MPERDSEPFS…YAKLRQQEIE (90 aa)) is disordered. The span at 16-25 (DGHDVDDPHS) shows a compositional bias: basic and acidic residues. The segment covering 42–53 (TPRAAPTSAPPS) has biased composition (low complexity). N6-acetyllysine occurs at positions 98 and 137. Lysine 151 participates in a covalent cross-link: Glycyl lysine isopeptide (Lys-Gly) (interchain with G-Cter in SUMO2). Residues 181–205 (KEKEEEELMEKPQKETKKDEDPENK) are disordered. Residue serine 287 is modified to Phosphoserine. The span at 294–303 (RNKKLKKKDK) shows a compositional bias: basic residues. Residues 294–402 (RNKKLKKKDK…PMDVDKGPGS (109 aa)) are disordered. A compositionally biased stretch (basic and acidic residues) spans 304–313 (GKLEEKKPPE). Glycyl lysine isopeptide (Lys-Gly) (interchain with G-Cter in SUMO2) cross-links involve residues lysine 310 and lysine 331. Positions 332–398 (TPRDKERERY…VDDEPMDVDK (67 aa)) are enriched in basic and acidic residues. 17 repeat units span residues 342–343 (RE), 344–345 (RE), 346–347 (RD), 348–349 (RE), 350–351 (RD), 352–353 (RD), 354–355 (RE), 356–357 (RD), 358–359 (RE), 360–361 (RD), 362–363 (RE), 364–365 (RE), 366–367 (RE), 368–369 (RD), 370–371 (RE), 372–373 (RE), and 374–375 (RE). The tract at residues 342 to 375 (RERERDRERDRDRERDRERDRERERERDRERERE) is 17 X 2 AA tandem repeats of R-[ED]. Residues lysine 386, lysine 388, lysine 404, and lysine 408 each participate in a glycyl lysine isopeptide (Lys-Gly) (interchain with G-Cter in SUMO2) cross-link. Phosphoserine occurs at positions 417 and 460. Threonine 485 is modified (phosphothreonine). Glycyl lysine isopeptide (Lys-Gly) (interchain with G-Cter in SUMO2) cross-links involve residues lysine 496, lysine 501, and lysine 509. Serine 536 carries the post-translational modification Phosphoserine. Glycyl lysine isopeptide (Lys-Gly) (interchain with G-Cter in SUMO2) cross-links involve residues lysine 541, lysine 543, and lysine 553.

The protein belongs to the RED family. In terms of assembly, component of the spliceosome B complex. Interacts with SMU1. Interacts with MAD1L1. May interact with DHX15. In terms of tissue distribution, ubiquitous.

The protein localises to the nucleus. It is found in the nucleoplasm. The protein resides in the chromosome. Its subcellular location is the cytoplasm. It localises to the cytoskeleton. The protein localises to the spindle pole. Involved in pre-mRNA splicing as a component of the spliceosome. Auxiliary spliceosomal protein that regulates selection of alternative splice sites in a small set of target pre-mRNA species. Required for normal mitotic cell cycle progression. Recruits MAD1L1 and MAD2L1 to kinetochores, and is required to trigger the spindle assembly checkpoint. Required for normal accumulation of SMU1. This is Protein Red (Ik) from Mus musculus (Mouse).